Consider the following 208-residue polypeptide: UPF0711 protein C18orf21 homolog (208 aa).

A compositionally biased stretch (basic residues) spans 123-137 (SKHKSTPGSASKHRT). Disordered regions lie at residues 123 to 180 (SKHK…KSSP) and 189 to 208 (MLENKQQGKKGGLKDFLSSL). Polar residues predominate over residues 138 to 152 (PQTVNWATPKSVANR). The span at 153–180 (TPSSTPRSASSNTSSSSSSKSSSVKSSP) shows a compositional bias: low complexity.

The protein belongs to the UPF0711 family.

This Danio rerio (Zebrafish) protein is UPF0711 protein C18orf21 homolog.